A 68-amino-acid chain; its full sequence is ATP synthase F(0) complex subunit 8 (68 aa).

A helical transmembrane segment spans residues 8 to 21 (VWPTMITPMLLTLF). The residue at position 54 (Lys54) is an N6-acetyllysine; alternate. Residue Lys54 is modified to N6-succinyllysine; alternate. Lys57 bears the N6-acetyllysine mark.

Belongs to the ATPase protein 8 family. Component of the ATP synthase complex composed at least of ATP5F1A/subunit alpha, ATP5F1B/subunit beta, ATP5MC1/subunit c (homooctomer), MT-ATP6/subunit a, MT-ATP8/subunit 8, ATP5ME/subunit e, ATP5MF/subunit f, ATP5MG/subunit g, ATP5MK/subunit k, ATP5MJ/subunit j, ATP5F1C/subunit gamma, ATP5F1D/subunit delta, ATP5F1E/subunit epsilon, ATP5PF/subunit F6, ATP5PB/subunit b, ATP5PD/subunit d, ATP5PO/subunit OSCP. ATP synthase complex consists of a soluble F(1) head domain (subunits alpha(3) and beta(3)) - the catalytic core - and a membrane F(0) domain - the membrane proton channel (subunits c, a, 8, e, f, g, k and j). These two domains are linked by a central stalk (subunits gamma, delta, and epsilon) rotating inside the F1 region and a stationary peripheral stalk (subunits F6, b, d, and OSCP). Interacts with PRICKLE3.

It localises to the mitochondrion membrane. Functionally, subunit 8, of the mitochondrial membrane ATP synthase complex (F(1)F(0) ATP synthase or Complex V) that produces ATP from ADP in the presence of a proton gradient across the membrane which is generated by electron transport complexes of the respiratory chain. ATP synthase complex consist of a soluble F(1) head domain - the catalytic core - and a membrane F(1) domain - the membrane proton channel. These two domains are linked by a central stalk rotating inside the F(1) region and a stationary peripheral stalk. During catalysis, ATP synthesis in the catalytic domain of F(1) is coupled via a rotary mechanism of the central stalk subunits to proton translocation. In vivo, can only synthesize ATP although its ATP hydrolase activity can be activated artificially in vitro. Part of the complex F(0) domain. The protein is ATP synthase F(0) complex subunit 8 of Homo sapiens (Human).